A 955-amino-acid chain; its full sequence is 26S proteasome non-ATPase regulatory subunit 1 (955 aa).

The segment at 279–313 (PGSTNTGTVPGSEKDSDAMEAEEKPGSTCVGKSAE) is disordered. Positions 290-303 (SEKDSDAMEAEEKP) are enriched in basic and acidic residues. PC repeat units lie at residues 403 to 436 (TATA…PGSA), 441 to 474 (GGLY…DIVR), 476 to 510 (GGSL…VTGE), 511 to 545 (AAGL…EKIL), 547 to 580 (GLAV…ILRR), 581 to 616 (SGMY…DVRR), 617 to 649 (AAVE…PHVR), 651 to 685 (GAAM…YVRQ), 686 to 726 (GALI…DVMA), and 729 to 761 (GAIL…PSVV). Disordered stretches follow at residues 839 to 879 (AKKK…NFQL) and 932 to 955 (AHGP…YIDD). Composition is skewed to basic and acidic residues over residues 842 to 854 (KEKE…KEEE) and 861 to 874 (TEKK…KEPE). Over residues 938-955 (EEEEQEPEPPEPFEYIDD) the composition is skewed to acidic residues.

This sequence belongs to the proteasome subunit S1 family. As to quaternary structure, component of the 19S proteasome regulatory particle complex. The 26S proteasome consists of a 20S core particle (CP) and two 19S regulatory subunits (RP). The regulatory particle is made of a lid composed of 9 subunits, a base containing 6 ATPases and few additional components including PSMD1. Interacts with ADRM1.

Component of the 26S proteasome, a multiprotein complex involved in the ATP-dependent degradation of ubiquitinated proteins. This complex plays a key role in the maintenance of protein homeostasis by removing misfolded or damaged proteins, which could impair cellular functions, and by removing proteins whose functions are no longer required. Therefore, the proteasome participates in numerous cellular processes, including cell cycle progression, apoptosis, or DNA damage repair. The sequence is that of 26S proteasome non-ATPase regulatory subunit 1 (PSMD1) from Gallus gallus (Chicken).